The sequence spans 71 residues: Conotoxin De13.1 (71 aa).

The N-terminal stretch at 1-19 is a signal peptide; that stretch reads MSGMGVLLLVLLLVMPLAA. The propeptide occupies 20–35; the sequence is FHQDGEGEATRRSGGL. Residues Pro-40 and Pro-44 each carry the 4-hydroxyproline modification. The residue at position 51 (Trp-51) is a 6'-bromotryptophan. Glu-52 is subject to 4-carboxyglutamate. Lys-55 bears the 5-hydroxylysine mark. The residue at position 58 (Pro-58) is a 4-hydroxyproline. Position 69 is a histidine amide (His-69).

It belongs to the conotoxin G superfamily. Contains 4 disulfide bonds. As to expression, expressed by the venom duct.

It is found in the secreted. This is Conotoxin De13.1 from Conasprella delessertii (Sozon's cone).